Consider the following 80-residue polypeptide: Small ribosomal subunit protein bS18c (80 aa).

A compositionally biased stretch (basic residues) spans 1–19 (MKKFISRPKRSSRRRKKTP). The segment at 1–24 (MKKFISRPKRSSRRRKKTPIKPGE) is disordered.

This sequence belongs to the bacterial ribosomal protein bS18 family. As to quaternary structure, part of the 30S ribosomal subunit.

The protein resides in the plastid. It is found in the chloroplast. The polypeptide is Small ribosomal subunit protein bS18c (Staurastrum punctulatum (Green alga)).